The sequence spans 493 residues: Glycerol kinase (493 aa).

Thr12 serves as a coordination point for ADP. Thr12, Thr13, and Ser14 together coordinate ATP. Thr12 serves as a coordination point for sn-glycerol 3-phosphate. Arg16 is a binding site for ADP. Arg82, Glu83, Tyr132, and Asp239 together coordinate sn-glycerol 3-phosphate. Glycerol contacts are provided by Arg82, Glu83, Tyr132, Asp239, and Gln240. ADP is bound by residues Thr261 and Gly303. 4 residues coordinate ATP: Thr261, Gly303, Gln307, and Gly402. Positions 402 and 406 each coordinate ADP.

The protein belongs to the FGGY kinase family.

It carries out the reaction glycerol + ATP = sn-glycerol 3-phosphate + ADP + H(+). It participates in polyol metabolism; glycerol degradation via glycerol kinase pathway; sn-glycerol 3-phosphate from glycerol: step 1/1. Key enzyme in the regulation of glycerol uptake and metabolism. Catalyzes the phosphorylation of glycerol to yield sn-glycerol 3-phosphate. This Thermococcus gammatolerans (strain DSM 15229 / JCM 11827 / EJ3) protein is Glycerol kinase.